Consider the following 82-residue polypeptide: Cortexin-1 (82 aa).

Residues methionine 1–valine 20 are disordered. Residues threonine 30–valine 50 form a helical membrane-spanning segment.

It belongs to the cortexin family.

The protein localises to the membrane. In terms of biological role, may mediate extracellular or intracellular signaling of cortical neurons during forebrain development. In Mus musculus (Mouse), this protein is Cortexin-1 (Ctxn1).